A 424-amino-acid polypeptide reads, in one-letter code: UDP-N-acetylglucosamine 1-carboxyvinyltransferase (424 aa).

22–23 (KN) contributes to the phosphoenolpyruvate binding site. R98 contributes to the UDP-N-acetyl-alpha-D-glucosamine binding site. C122 (proton donor) is an active-site residue. 2-(S-cysteinyl)pyruvic acid O-phosphothioketal is present on C122. UDP-N-acetyl-alpha-D-glucosamine contacts are provided by residues 127 to 131 (RPVDQ), D312, and I334.

It belongs to the EPSP synthase family. MurA subfamily.

It localises to the cytoplasm. The enzyme catalyses phosphoenolpyruvate + UDP-N-acetyl-alpha-D-glucosamine = UDP-N-acetyl-3-O-(1-carboxyvinyl)-alpha-D-glucosamine + phosphate. It functions in the pathway cell wall biogenesis; peptidoglycan biosynthesis. Its function is as follows. Cell wall formation. Adds enolpyruvyl to UDP-N-acetylglucosamine. The polypeptide is UDP-N-acetylglucosamine 1-carboxyvinyltransferase (Xanthomonas axonopodis pv. citri (strain 306)).